The following is a 109-amino-acid chain: Large ribosomal subunit protein uL22 (109 aa).

Belongs to the universal ribosomal protein uL22 family. As to quaternary structure, part of the 50S ribosomal subunit.

Functionally, this protein binds specifically to 23S rRNA; its binding is stimulated by other ribosomal proteins, e.g. L4, L17, and L20. It is important during the early stages of 50S assembly. It makes multiple contacts with different domains of the 23S rRNA in the assembled 50S subunit and ribosome. The globular domain of the protein is located near the polypeptide exit tunnel on the outside of the subunit, while an extended beta-hairpin is found that lines the wall of the exit tunnel in the center of the 70S ribosome. This chain is Large ribosomal subunit protein uL22, found in Cupriavidus taiwanensis (strain DSM 17343 / BCRC 17206 / CCUG 44338 / CIP 107171 / LMG 19424 / R1) (Ralstonia taiwanensis (strain LMG 19424)).